The sequence spans 363 residues: Autophagy-related protein 3 (363 aa).

Composition is skewed to basic and acidic residues over residues 84 to 106 and 129 to 138; these read DFAGDAGHDETVVRDGEDFRGDG and ARVRDVRTVD. The interval 84 to 171 is flexible region; it reads DFAGDAGHDE…DDEAIIRDPK (88 aa). The tract at residues 84-174 is disordered; it reads DFAGDAGHDE…AIIRDPKADN (91 aa). The segment covering 139–164 has biased composition (acidic residues); the sequence is ESGEMGEREDDEDDIPDMEDDDDDDE. C247 acts as the Glycyl thioester intermediate in catalysis. The segment at 251–339 is handle region; the sequence is SVMKTLLDRA…EEEVAIRVDQ (89 aa).

The protein belongs to the ATG3 family. Monomer. Interacts with atg8 through an intermediate thioester bond through the C-terminal Gly of atg8. Interacts with the C-terminal region of the E1-like atg7 enzyme. Also interacts with the atg12-atg5 conjugate.

Its subcellular location is the cytoplasm. E2 conjugating enzyme required for the cytoplasm to vacuole transport (Cvt) and autophagy. Required for selective autophagic degradation of the nucleus (nucleophagy) as well as for mitophagy which contributes to regulate mitochondrial quantity and quality by eliminating the mitochondria to a basal level to fulfill cellular energy requirements and preventing excess ROS production. Responsible for the E2-like covalent binding of phosphatidylethanolamine to the C-terminal Gly of atg8. The atg12-atg5 conjugate plays a role of an E3 and promotes the transfer of atg8 from atg3 to phosphatidylethanolamine (PE). This step is required for the membrane association of atg8. The formation of the atg8-phosphatidylethanolamine conjugate is essential for autophagy and for the cytoplasm to vacuole transport (Cvt). The atg8-PE conjugate mediates tethering between adjacent membranes and stimulates membrane hemifusion, leading to expansion of the autophagosomal membrane during autophagy. Required for normal mycelial growth and conidiogenesis, and regulates sclerotial formation. Plays an essential role in pathogenesis. The sequence is that of Autophagy-related protein 3 from Botryotinia fuckeliana (strain BcDW1) (Noble rot fungus).